A 1056-amino-acid polypeptide reads, in one-letter code: RNA cytidine acetyltransferase (1056 aa).

286-295 is a binding site for ATP; the sequence is GRGKSAALGI. Residues 433-446 are compositionally biased toward polar residues; the sequence is QNNTSGRESTQTAV. Residues 433–463 form a disordered region; the sequence is QNNTSGRESTQTAVVSRDNKEKDSHLHSQSR. Residues 449–463 are compositionally biased toward basic and acidic residues; the sequence is RDNKEKDSHLHSQSR. Arginine 475 provides a ligand contact to ATP. An N-acetyltransferase domain is found at 566–706; that stretch reads VLLPPIDPKD…VKLRDAKTLP (141 aa). Acetyl-CoA contacts are provided by residues 638 to 640, 645 to 651, and asparagine 739; these read IAT and ASMGYGS. 3 positions are modified to phosphoserine: serine 1001, serine 1007, and serine 1010.

It belongs to the RNA cytidine acetyltransferase family. NAT10 subfamily. Interacts with TAN1. Associates with 90S pre-ribosomal particles.

Its subcellular location is the nucleus. The protein localises to the nucleolus. It carries out the reaction a cytidine in 18S rRNA + acetyl-CoA + ATP + H2O = an N(4)-acetylcytidine in 18S rRNA + ADP + phosphate + CoA + H(+). The enzyme catalyses a cytidine in tRNA + acetyl-CoA + ATP + H2O = an N(4)-acetylcytidine in tRNA + ADP + phosphate + CoA + H(+). Its function is as follows. RNA cytidine acetyltransferase with specificity toward both 18S rRNA and tRNAs. Catalyzes the formation of N(4)-acetylcytidine (ac4C) at positions 1280 and 1773 in 18S rRNA. Required for early nucleolar cleavages of precursor rRNA at sites A0, A1 and A2 during 18S rRNA synthesis. Catalyzes the formation of ac4C at position 12 in serine and leucine tRNAs. Requires the tRNA-binding adapter protein TAN1 for full tRNA acetyltransferase activity but not for 18S rRNA acetylation. In Saccharomyces cerevisiae (strain ATCC 204508 / S288c) (Baker's yeast), this protein is RNA cytidine acetyltransferase.